Here is a 217-residue protein sequence, read N- to C-terminus: MSSKVSRDTLYEAVREVLHGNQRKRRKFLETVELQISLKNYDPQKDKRFSGTVRLKSTPRPKFSVCVLGDQQHCDERKAVDIPHMDIEALKKLNKNKKLVKKLAKKYDAFLASESLIKQIPRILGPGLNKAGKFPSLLTHNENMVAKVDEVKSTIKFQMKKVLCLAVAVGHVKMTDDELVYNIHLAVNFLVSLLKKNWQNVRALYIKSTMGKPQRLY.

Ser-2 carries the N-acetylserine modification. Tyr-11 is subject to Phosphotyrosine. An N6-acetyllysine mark is found at Lys-91 and Lys-106. An N6-acetyllysine; alternate modification is found at Lys-118. Lys-118 participates in a covalent cross-link: Glycyl lysine isopeptide (Lys-Gly) (interchain with G-Cter in SUMO1); alternate. Lys-118 participates in a covalent cross-link: Glycyl lysine isopeptide (Lys-Gly) (interchain with G-Cter in SUMO2); alternate. Residue Lys-161 forms a Glycyl lysine isopeptide (Lys-Gly) (interchain with G-Cter in SUMO2) linkage.

The protein belongs to the universal ribosomal protein uL1 family. Component of the large ribosomal subunit.

The protein resides in the cytoplasm. In terms of biological role, component of the large ribosomal subunit. The ribosome is a large ribonucleoprotein complex responsible for the synthesis of proteins in the cell. The chain is Large ribosomal subunit protein uL1 (Rpl10a) from Mus musculus (Mouse).